Consider the following 363-residue polypeptide: Type-2 angiotensin II receptor (363 aa).

The Extracellular portion of the chain corresponds to 1–45 (MKDNFSFAATSRNITSSLPFDNLNATGTNESAFNCSHKPADKHLE). 5 N-linked (GlcNAc...) asparagine glycosylation sites follow: Asn4, Asn13, Asn24, Asn29, and Asn34. Intrachain disulfides connect Cys35–Cys290 and Cys117–Cys195. The helical transmembrane segment at 46-70 (AIPVLYYMIFVIGFAVNIVVVSLFC) threads the bilayer. At 71-80 (CQKGPKKVSS) the chain is on the cytoplasmic side. A helical membrane pass occupies residues 81–104 (IYIFNLAVADLLLLATLPLWATYY). The angiotensin II site is built by Tyr103 and Tyr104. Residues 105–114 (SYRYDWLFGP) lie on the Extracellular side of the membrane. The helical transmembrane segment at 115 to 140 (VMCKVFGSFLTLNMFASIFFITCMSV) threads the bilayer. Over 141–159 (DRYQSVIYPFLSQRRNPWQ) the chain is Cytoplasmic. The chain crosses the membrane as a helical span at residues 160 to 181 (ASYVVPLVWCMACLSSLPTFYF). The angiotensin II site is built by Arg182, Tyr204, and Lys215. At 182–206 (RDVRTIEYLGVNACIMAFPPEKYAQ) the chain is on the extracellular side. The helical transmembrane segment at 207–232 (WSAGIALMKNILGFIIPLIFIATCYF) threads the bilayer. The Cytoplasmic segment spans residues 233–257 (GIRKHLLKTNSYGKNRITRDQVLKM). A helical membrane pass occupies residues 258-281 (AAAVVLAFIICWLPFHVLTFLDAL). Asp279 contributes to the angiotensin II binding site. Over 282–294 (TWMGIINSCEVIA) the chain is Extracellular. Residues 295–320 (VIDLALPFAILLGFTNSCVNPFLYCF) traverse the membrane as a helical segment. Asp297 provides a ligand contact to angiotensin II. Over 321 to 363 (VGNRFQQKLRSVFRVPITWLQGKRETMSCRKSSSLREMDTFVS) the chain is Cytoplasmic. Residues 324–333 (RFQQKLRSVF) are helix VIII. At Ser354 the chain carries Phosphoserine; by PKC.

It belongs to the G-protein coupled receptor 1 family. As to quaternary structure, interacts with MTUS1. In terms of tissue distribution, abundant expression in fetal tissues, immature brain, skin wound and atretic ovarian follicles.

It localises to the cell membrane. In terms of biological role, receptor for angiotensin II, a vasoconstricting peptide. Signals primarily via a non-canonical G-protein- and beta-arrestin independent pathways. Cooperates with MTUS1 to inhibit ERK2 activation and cell proliferation. This Rattus norvegicus (Rat) protein is Type-2 angiotensin II receptor.